The primary structure comprises 563 residues: GTPase Obg (563 aa).

Positions 2–168 constitute an Obg domain; the sequence is SDFVDRVTVH…RDVILELKSI (167 aa). Positions 169-349 constitute an OBG-type G domain; the sequence is ADVALVGFPS…LNFALSALVH (181 aa). Residues 175–182, 200–204, 221–224, 301–304, and 330–332 contribute to the GTP site; these read GFPSAGKS, FTTLV, DVPG, NKID, and STA. Residues Ser182 and Thr202 each coordinate Mg(2+). One can recognise an OCT domain in the interval 383–469; it reads DEGGSALEFT…ARMVEFDWDP (87 aa). Residues 529-563 form a disordered region; sequence RKAGHWADPTVDDDRHDETSLFGHGESSEDGETEE.

It belongs to the TRAFAC class OBG-HflX-like GTPase superfamily. OBG GTPase family. As to quaternary structure, monomer. Mg(2+) is required as a cofactor.

It localises to the cytoplasm. Its function is as follows. An essential GTPase which binds GTP, GDP and possibly (p)ppGpp with moderate affinity, with high nucleotide exchange rates and a fairly low GTP hydrolysis rate. Plays a role in control of the cell cycle, stress response, ribosome biogenesis and in those bacteria that undergo differentiation, in morphogenesis control. The chain is GTPase Obg from Bifidobacterium longum (strain NCC 2705).